The following is a 324-amino-acid chain: Pepsin-2B (324 aa).

The region spanning 14–321 (YYGVISIGTP…DRTNNKVGFA (308 aa)) is the Peptidase A1 domain. Residue Asp-32 is part of the active site. Cys-45 and Cys-50 form a disulfide bridge. The disordered stretch occupies residues 86–109 (QDTVSVGGGSDPNQELGESQTEPG). Positions 96–107 (DPNQELGESQTE) are enriched in polar residues. A disulfide bond links Cys-206 and Cys-209. Residue Asp-214 is part of the active site. A disulfide bond links Cys-247 and Cys-280.

This sequence belongs to the peptidase A1 family.

The polypeptide is Pepsin-2B (Gadus morhua (Atlantic cod)).